The chain runs to 189 residues: Glutathione-dependent formaldehyde-activating enzyme (189 aa).

One can recognise a CENP-V/GFA domain in the interval 20–166; that stretch reads FAGGTLVCAC…LRTIGLEPYD (147 aa). Residues cysteine 27, cysteine 29, cysteine 48, cysteine 50, cysteine 53, cysteine 95, and cysteine 98 each coordinate Zn(2+).

The protein belongs to the Gfa family. Zn(2+) is required as a cofactor.

The enzyme catalyses S-(hydroxymethyl)glutathione = glutathione + formaldehyde. The protein operates within one-carbon metabolism; formaldehyde degradation; formate from formaldehyde (glutathione route): step 1/3. Catalyzes the condensation of formaldehyde and glutathione to S-hydroxymethylglutathione. The sequence is that of Glutathione-dependent formaldehyde-activating enzyme from Mesorhizobium japonicum (strain LMG 29417 / CECT 9101 / MAFF 303099) (Mesorhizobium loti (strain MAFF 303099)).